Here is a 236-residue protein sequence, read N- to C-terminus: 3-deoxy-D-manno-octulosonic acid kinase (236 aa).

Residue Asp-166 is part of the active site.

It belongs to the protein kinase superfamily. KdkA/RfaP family.

It is found in the cell inner membrane. The catalysed reaction is an alpha-Kdo-(2-&gt;6)-lipid IVA + ATP = a 4-O-phospho-alpha-Kdo-(2-&gt;6)-lipid IVA + ADP + H(+). Its pathway is bacterial outer membrane biogenesis; LPS core biosynthesis. Its function is as follows. Catalyzes the ATP-dependent phosphorylation of the 3-deoxy-D-manno-octulosonic acid (Kdo) residue in Kdo-lipid IV(A) at the 4-OH position. In Photobacterium profundum (strain SS9), this protein is 3-deoxy-D-manno-octulosonic acid kinase.